A 364-amino-acid polypeptide reads, in one-letter code: Chorismate synthase (364 aa).

Arg-47 is a binding site for NADP(+). Residues 124 to 126 (RGS), 240 to 241 (NA), Gly-284, 299 to 303 (KPTPS), and Arg-326 each bind FMN.

It belongs to the chorismate synthase family. The cofactor is FMNH2.

The enzyme catalyses 5-O-(1-carboxyvinyl)-3-phosphoshikimate = chorismate + phosphate. It participates in metabolic intermediate biosynthesis; chorismate biosynthesis; chorismate from D-erythrose 4-phosphate and phosphoenolpyruvate: step 7/7. Catalyzes the anti-1,4-elimination of the C-3 phosphate and the C-6 proR hydrogen from 5-enolpyruvylshikimate-3-phosphate (EPSP) to yield chorismate, which is the branch point compound that serves as the starting substrate for the three terminal pathways of aromatic amino acid biosynthesis. This reaction introduces a second double bond into the aromatic ring system. The polypeptide is Chorismate synthase (Methanobrevibacter smithii (strain ATCC 35061 / DSM 861 / OCM 144 / PS)).